We begin with the raw amino-acid sequence, 281 residues long: 2-dehydro-3-deoxyphosphooctonate aldolase (281 aa).

The protein belongs to the KdsA family.

The protein localises to the cytoplasm. The catalysed reaction is D-arabinose 5-phosphate + phosphoenolpyruvate + H2O = 3-deoxy-alpha-D-manno-2-octulosonate-8-phosphate + phosphate. The protein operates within carbohydrate biosynthesis; 3-deoxy-D-manno-octulosonate biosynthesis; 3-deoxy-D-manno-octulosonate from D-ribulose 5-phosphate: step 2/3. Its pathway is bacterial outer membrane biogenesis; lipopolysaccharide biosynthesis. This is 2-dehydro-3-deoxyphosphooctonate aldolase from Stutzerimonas stutzeri (strain A1501) (Pseudomonas stutzeri).